We begin with the raw amino-acid sequence, 472 residues long: MSDTTAIANVFKLIEEYDIKFVLLRFTDIKGKEHGVSLPVNLVDEDLFEDGKMFDGSSVEGWKAINKADMLLMPMPETAVVDPFAQIPTLSLRCSIYEPSTMQSYDRDPRSIAIRAENYMRSTGIADEALFGPEPEFFLFDDVRFDVSMNRSSYSVDDIEAAWNTNKKYEDGNNAYRPLKKGGYCAVAPIDSAHDIRSEMCLILEEMGLVIEAHHHEVATAGQNEIATRFNTLTTKADETQIYKYVVQNVAYEHGKTACFMPKPITGDNGSGMHCNMSLSKDGKNVFQGDKYAGLSETALYYIGGIIKHAKALNAFTNPSTNSYKRLVPGFEAPVLLAYSASNRSASIRIPAVTNPKAIRIEARFPDPLANPYLAFAALLMAGLDGIINKIHPGDAMDKNLYDLPPEELQNIPAVASSLEEALNALEQDYEFLTKGNVFTQAFIDAFITIKRKEVERLNMTPHPVEFEMYYA.

The region spanning 17–101 (YDIKFVLLRF…LRCSIYEPST (85 aa)) is the GS beta-grasp domain. The 364-residue stretch at 109 to 472 (PRSIAIRAEN…HPVEFEMYYA (364 aa)) folds into the GS catalytic domain. Mg(2+) is bound by residues Glu134 and Glu136. Glu212 is a binding site for ATP. Residues Glu217 and Glu225 each contribute to the Mg(2+) site. L-glutamate contacts are provided by residues 269-270 (NG) and Gly270. A Mg(2+)-binding site is contributed by His274. ATP-binding positions include 276 to 278 (NMS) and Ser278. L-glutamate is bound by residues Arg326, Glu332, and Arg344. ATP is bound by residues Arg344, Arg349, and Lys357. Residue Glu362 participates in Mg(2+) binding. Residue Arg364 participates in L-glutamate binding. O-AMP-tyrosine is present on Tyr402.

This sequence belongs to the glutamine synthetase family. Oligomer of 12 subunits arranged in the form of two hexameric ring. Mg(2+) is required as a cofactor.

Its subcellular location is the cytoplasm. The enzyme catalyses L-glutamate + NH4(+) + ATP = L-glutamine + ADP + phosphate + H(+). With respect to regulation, the activity of this enzyme could be controlled by adenylation under conditions of abundant glutamine. Its function is as follows. Catalyzes the ATP-dependent biosynthesis of glutamine from glutamate and ammonia. This is Glutamine synthetase from Pasteurella multocida (strain Pm70).